The chain runs to 162 residues: MVSVETVGSIFIKALKLIINLVIIFLYRWGDGGEFLGIGGTWNLNEEKSADAEIVASGVMVGFLIYTGCHTIAFAFGTTKHKGELCDTIMNVVGCIMWIAVGGVALHYWKGYMSDEGFLYVNSERQVGIAMGSLCVIEGALYLLDTVLACIHYSKGDTDYTQ.

Residues 2 to 6 (VSVET) lie on the Cytoplasmic side of the membrane. The helical transmembrane segment at 7–27 (VGSIFIKALKLIINLVIIFLY) threads the bilayer. At 28–53 (RWGDGGEFLGIGGTWNLNEEKSADAE) the chain is on the extracellular side. The chain crosses the membrane as a helical span at residues 54-74 (IVASGVMVGFLIYTGCHTIAF). Residues 75-88 (AFGTTKHKGELCDT) are Cytoplasmic-facing. The helical transmembrane segment at 89–109 (IMNVVGCIMWIAVGGVALHYW) threads the bilayer. Over 110–128 (KGYMSDEGFLYVNSERQVG) the chain is Extracellular. The helical transmembrane segment at 129–149 (IAMGSLCVIEGALYLLDTVLA) threads the bilayer. Residues 150-162 (CIHYSKGDTDYTQ) lie on the Cytoplasmic side of the membrane.

Forms a complex with Tsp2A and mesh. Interacts with mesh; the interaction may be necessary for the localization of both proteins to the cell apicolateral region.

It is found in the apicolateral cell membrane. It localises to the cell junction. Its subcellular location is the septate junction. Its function is as follows. Required for assembly of smooth septate junctions (sSJs), together with mesh and Tsp2A. May be important for barrier function of the midgut epithelium. In Drosophila melanogaster (Fruit fly), this protein is Protein snakeskin.